Reading from the N-terminus, the 319-residue chain is Malate dehydrogenase (319 aa).

Residues 10–15 (GAGNIG) and Asp-34 contribute to the NAD(+) site. Residues Arg-83 and Arg-89 each contribute to the substrate site. Residues Asn-96 and 119–121 (ITN) each bind NAD(+). 2 residues coordinate substrate: Asn-121 and Arg-152. His-176 serves as the catalytic Proton acceptor.

This sequence belongs to the LDH/MDH superfamily. MDH type 3 family.

The catalysed reaction is (S)-malate + NAD(+) = oxaloacetate + NADH + H(+). Catalyzes the reversible oxidation of malate to oxaloacetate. The sequence is that of Malate dehydrogenase from Francisella tularensis subsp. tularensis (strain FSC 198).